The chain runs to 304 residues: MNGIIPLWKERGMTSHDCVFKLRKILHTKKVGHTGTLDPEVEGVLPICIGRATKLAEYVTDEGKVYVAEITLGKSTTTEDATGEIIATKDLAEISPEALQSVLTKLTGKITQIPPMFSAVKVNGKKLYEYARAGIEVERPSRQVDIYSLTRLDGLASLNESNPTFQLEISCGKGTYIRTLAVMIGELLGYPAHMSKLERTRSGFFKKEDCFTLSEIDEMMQANDLNFLYPLEKGIESMTKLIIDDEIHAKVLNGALLPKALFVSVENESRVALIFEGKLTAIYKPHPEKKDLWKPEKVIELNEA.

The active-site Nucleophile is aspartate 38.

It belongs to the pseudouridine synthase TruB family. Type 1 subfamily.

It catalyses the reaction uridine(55) in tRNA = pseudouridine(55) in tRNA. In terms of biological role, responsible for synthesis of pseudouridine from uracil-55 in the psi GC loop of transfer RNAs. The polypeptide is tRNA pseudouridine synthase B (Listeria welshimeri serovar 6b (strain ATCC 35897 / DSM 20650 / CCUG 15529 / CIP 8149 / NCTC 11857 / SLCC 5334 / V8)).